A 701-amino-acid polypeptide reads, in one-letter code: Polyribonucleotide nucleotidyltransferase (701 aa).

Residues Asp487 and Asp493 each contribute to the Mg(2+) site. The KH domain occupies 553–612 (PRLYTLRINPDKIRDVIGKGGSVIRALTEETGTSIDIAEDGLITIASVSAEGAEEAKRRI). In terms of domain architecture, S1 motif spans 622-692 (GKIYEGTVVK…ERGRIRLSIK (71 aa)).

This sequence belongs to the polyribonucleotide nucleotidyltransferase family. Requires Mg(2+) as cofactor.

The protein resides in the cytoplasm. The enzyme catalyses RNA(n+1) + phosphate = RNA(n) + a ribonucleoside 5'-diphosphate. Functionally, involved in mRNA degradation. Catalyzes the phosphorolysis of single-stranded polyribonucleotides processively in the 3'- to 5'-direction. This Laribacter hongkongensis (strain HLHK9) protein is Polyribonucleotide nucleotidyltransferase.